A 393-amino-acid polypeptide reads, in one-letter code: MTRVVLAAAYRTPIGVFGGAFKDVPAYDLGATLIEHIIKETGLNPSEINEVIIGNVLQAGQGQNPARIAAMKGGLPETVPAFTVNKVCGSGLKSIQLAYQSIVTGENDIVLAGGMENMSQSPMLVNNSRFGFKMGHQSMVDSMVYDGLTDVFNQYHMGITAENLVEQYGISREEQDTFAVNSQQKAVRAQQNGEFDSEIVPVSIPQRKGEPIVVTKDEGVRENVSVEKLSRLRPAFKKDGTVTAGNASGINDGAAMMLVMSEDKAKELNIEPLAVLDGFGSHGVDPAIMGIAPVDAVEKALKRSKKELSDIDVFELNEAFAAQSLAVDRELKLPPEKVNVKGGAIALGHPIGASGARVLVTLLHQLNDEVETGLTSLCIGGGQAIAAVVSKYK.

Cys-88 functions as the Acyl-thioester intermediate in the catalytic mechanism. Catalysis depends on proton acceptor residues His-349 and Cys-378.

Belongs to the thiolase-like superfamily. Thiolase family.

It localises to the cytoplasm. It carries out the reaction 2 acetyl-CoA = acetoacetyl-CoA + CoA. The protein is Probable acetyl-CoA acyltransferase of Staphylococcus aureus (strain MRSA252).